Reading from the N-terminus, the 625-residue chain is Tyrosine-protein kinase ITK/TSK (625 aa).

Residues 4–117 (FILLEEQLIK…WVLTLKEETR (114 aa)) enclose the PH domain. A Btk-type zinc finger spans residues 119–155 (NNSLVSKYHPNFWMDGRWRCCSQLEKPAVGCAPYDPS). 4 residues coordinate Zn(2+): His127, Cys138, Cys139, and Cys149. The interval 153-174 (DPSKNASKKPLPPTPEDNRRSF) is disordered. Residues 177–237 (PEETLVIALY…PSSYLVEKSP (61 aa)) enclose the SH3 domain. Residue Tyr186 is modified to Phosphotyrosine; by autocatalysis. The SH2 domain occupies 245–343 (WYNKSISRDK…GLVTRLRYPV (99 aa)). One can recognise a Protein kinase domain in the interval 368–620 (LTFVQEIGSG…SQLLSQLAEI (253 aa)). Residues 374-382 (IGSGQFGLV) and Lys396 each bind ATP. Residue Asp487 is the Proton acceptor of the active site. Position 517 is a phosphotyrosine; by LCK (Tyr517). Ser570 is modified (phosphoserine).

It belongs to the protein kinase superfamily. Tyr protein kinase family. TEC subfamily. Homooligomerizes; this association negatively regulates kinase activity. Interacts with PPIA/CYPA; this interaction regulates TCR signal strength via a proline-directed conformational switch in ITK. Interacts with THEMIS. Interacts with FASLG. Interacts with VAV1; this interaction is important for VAV1 localization and TCR-induced actin polarization. Interacts with TBX21. The cofactor is Zn(2+). Post-translationally, phosphorylated at Tyr-517 in the activation loop of the kinase domain by LCK. Subsequent autophosphorylation at Tyr-186 leads to the kinase activation. The autophosphorylated Tyr-186 lies within the substrate binding sequence of the SH3 domain. Ubiquitinated. In terms of tissue distribution, is detected in the thymus, lymph node and very faintly in the spleen, but is not detected in the liver, lung, kidney, heart, brain, intestine or testis. Expressed in T-lymphocytes and mast cells. It may also be expressed in natural killer cells.

The protein resides in the cytoplasm. Its subcellular location is the nucleus. It catalyses the reaction L-tyrosyl-[protein] + ATP = O-phospho-L-tyrosyl-[protein] + ADP + H(+). In terms of biological role, tyrosine kinase that plays an essential role in regulation of the adaptive immune response. Regulates the development, function and differentiation of conventional T-cells and nonconventional NKT-cells. When antigen presenting cells (APC) activate T-cell receptor (TCR), a series of phosphorylation lead to the recruitment of ITK to the cell membrane, in the vicinity of the stimulated TCR receptor, where it is phosphorylated by LCK. Phosphorylation leads to ITK autophosphorylation and full activation. Once activated, phosphorylates PLCG1, leading to the activation of this lipase and subsequent cleavage of its substrates. In turn, the endoplasmic reticulum releases calcium in the cytoplasm and the nuclear activator of activated T-cells (NFAT) translocates into the nucleus to perform its transcriptional duty. Phosphorylates 2 essential adapter proteins: the linker for activation of T-cells/LAT protein and LCP2. Then, a large number of signaling molecules such as VAV1 are recruited and ultimately lead to lymphokine production, T-cell proliferation and differentiation. Required for TCR-mediated calcium response in gamma-delta T-cells, may also be involved in the modulation of the transcriptomic signature in the Vgamma2-positive subset of immature gamma-delta T-cells. Phosphorylates TBX21 at 'Tyr-525' and mediates its interaction with GATA3. The sequence is that of Tyrosine-protein kinase ITK/TSK (Itk) from Mus musculus (Mouse).